A 201-amino-acid chain; its full sequence is MAKKFTQHRGIVLPLDAANVDTDAIIPKQFLQMVTRTGFGRNLFYDWRYLDAEGQLANPDFVLNKPEFSGASIMLTRENFGCGSSREHAPWALTDYGIQAIIGSGFADIFANNAFNNQLLLVTLSEQQVDELFQQVAAQPGIGFTVDLESQQVQAGDNIYPFAIDPFRRHCLLNGLDAIGLTLQHDADISAWERQQPSFLR.

It belongs to the LeuD family. LeuD type 1 subfamily. As to quaternary structure, heterodimer of LeuC and LeuD.

It catalyses the reaction (2R,3S)-3-isopropylmalate = (2S)-2-isopropylmalate. It participates in amino-acid biosynthesis; L-leucine biosynthesis; L-leucine from 3-methyl-2-oxobutanoate: step 2/4. Catalyzes the isomerization between 2-isopropylmalate and 3-isopropylmalate, via the formation of 2-isopropylmaleate. The protein is 3-isopropylmalate dehydratase small subunit of Erwinia tasmaniensis (strain DSM 17950 / CFBP 7177 / CIP 109463 / NCPPB 4357 / Et1/99).